The primary structure comprises 1191 residues: Puratrophin-1 (1191 aa).

Disordered stretches follow at residues 1-152 (MERP…DPVG) and 707-728 (AGGG…SDPR). Ser-64 carries the phosphoserine modification. The span at 111 to 120 (SHLSLAQGES) shows a compositional bias: polar residues. The DH domain occupies 732–908 (RLQLVLAEMV…HFQLRHGNDL (177 aa)). A PH domain is found at 920–1027 (NLKEQGQLVR…WTADISHLLW (108 aa)). Positions 1150-1176 (SLTAEDSEISSQCPSASGSSGSDSSCV) are disordered. Over residues 1159–1176 (SSQCPSASGSSGSDSSCV) the composition is skewed to low complexity.

Expressed in kidney, Leydig cells in the testis, epithelial cells in the prostate gland and Langerhans islet in the pancreas. Isoform 1 and isoform 3 are strongly expressed in Purkinje cells and to a lower extent in other neurons (at protein level). Widely expressed at low levels. More strongly expressed in testis and pancreas.

In terms of biological role, possible role in intracellular signaling and cytoskeleton dynamics at the Golgi. This Homo sapiens (Human) protein is Puratrophin-1 (PLEKHG4).